The following is a 732-amino-acid chain: Elongation factor 2 (732 aa).

The tr-type G domain maps to 19–260 (ERIRNIGIAA…MVVRHLPSPI (242 aa)). GTP-binding positions include 28–35 (AHIDHGKT), 94–98 (DTPGH), and 148–151 (NKVD). His597 is modified (diphthamide).

This sequence belongs to the TRAFAC class translation factor GTPase superfamily. Classic translation factor GTPase family. EF-G/EF-2 subfamily.

It is found in the cytoplasm. Its function is as follows. Catalyzes the GTP-dependent ribosomal translocation step during translation elongation. During this step, the ribosome changes from the pre-translocational (PRE) to the post-translocational (POST) state as the newly formed A-site-bound peptidyl-tRNA and P-site-bound deacylated tRNA move to the P and E sites, respectively. Catalyzes the coordinated movement of the two tRNA molecules, the mRNA and conformational changes in the ribosome. The chain is Elongation factor 2 (fusA) from Pyrococcus horikoshii (strain ATCC 700860 / DSM 12428 / JCM 9974 / NBRC 100139 / OT-3).